A 516-amino-acid polypeptide reads, in one-letter code: Acetylcholine receptor subunit alpha-like (516 aa).

The N-terminal stretch at methionine 1 to glycine 21 is a signal peptide. The Extracellular segment spans residues asparagine 22–tyrosine 243. Residues asparagine 45 and asparagine 132 are each glycosylated (N-linked (GlcNAc...) asparagine). 2 disulfides stabilise this stretch: cysteine 149–cysteine 163 and cysteine 222–cysteine 223. A glycan (N-linked (GlcNAc...) asparagine) is linked at asparagine 233. Helical transmembrane passes span threonine 244 to leucine 264, leucine 274 to proline 294, and phenylalanine 306 to asparagine 326. The Cytoplasmic portion of the chain corresponds to valine 327–arginine 465. A helical membrane pass occupies residues proline 466–alanine 486.

Belongs to the ligand-gated ion channel (TC 1.A.9) family. Acetylcholine receptor (TC 1.A.9.1) subfamily.

Its subcellular location is the postsynaptic cell membrane. The protein localises to the cell membrane. Its function is as follows. After binding acetylcholine, the AChR responds by an extensive change in conformation that affects all subunits and leads to opening of an ion-conducting channel across the plasma membrane. This Manduca sexta (Tobacco hawkmoth) protein is Acetylcholine receptor subunit alpha-like (ARA1).